The following is a 164-amino-acid chain: Cytochrome c-type biogenesis protein CcmE (164 aa).

The Cytoplasmic portion of the chain corresponds to 1–8; it reads MNPRRKKR. Residues 9–29 traverse the membrane as a helical; Signal-anchor for type II membrane protein segment; that stretch reads LTLAVALIGGVAAIASLLLYA. Over 30–164 the chain is Periplasmic; it reads LNSNLNLFFT…EDQSKAGGYK (135 aa). Residues His131 and Tyr135 each contribute to the heme site. Residues 140-164 form a disordered region; the sequence is VAEAMGQSHEKLDYSEDQSKAGGYK. The segment covering 147–158 has biased composition (basic and acidic residues); that stretch reads SHEKLDYSEDQS.

Belongs to the CcmE/CycJ family.

It is found in the cell inner membrane. Functionally, heme chaperone required for the biogenesis of c-type cytochromes. Transiently binds heme delivered by CcmC and transfers the heme to apo-cytochromes in a process facilitated by CcmF and CcmH. This is Cytochrome c-type biogenesis protein CcmE from Shewanella piezotolerans (strain WP3 / JCM 13877).